The primary structure comprises 250 residues: 1-(5-phosphoribosyl)-5-[(5-phosphoribosylamino)methylideneamino] imidazole-4-carboxamide isomerase (250 aa).

The Proton acceptor role is filled by D7. The active-site Proton donor is the D129.

Belongs to the HisA/HisF family.

The protein resides in the cytoplasm. The enzyme catalyses 1-(5-phospho-beta-D-ribosyl)-5-[(5-phospho-beta-D-ribosylamino)methylideneamino]imidazole-4-carboxamide = 5-[(5-phospho-1-deoxy-D-ribulos-1-ylimino)methylamino]-1-(5-phospho-beta-D-ribosyl)imidazole-4-carboxamide. It participates in amino-acid biosynthesis; L-histidine biosynthesis; L-histidine from 5-phospho-alpha-D-ribose 1-diphosphate: step 4/9. The protein is 1-(5-phosphoribosyl)-5-[(5-phosphoribosylamino)methylideneamino] imidazole-4-carboxamide isomerase of Shewanella denitrificans (strain OS217 / ATCC BAA-1090 / DSM 15013).